A 282-amino-acid chain; its full sequence is Light-independent protochlorophyllide reductase iron-sulfur ATP-binding protein (282 aa).

ATP-binding positions include 10 to 15 (GIGKST) and Lys-39. Ser-14 contributes to the Mg(2+) binding site. Positions 95 and 129 each coordinate [4Fe-4S] cluster. 180 to 181 (NR) contacts ATP.

This sequence belongs to the NifH/BchL/ChlL family. Homodimer. Protochlorophyllide reductase is composed of three subunits; ChlL, ChlN and ChlB. The cofactor is [4Fe-4S] cluster.

The protein resides in the plastid. It is found in the cyanelle. It catalyses the reaction chlorophyllide a + oxidized 2[4Fe-4S]-[ferredoxin] + 2 ADP + 2 phosphate = protochlorophyllide a + reduced 2[4Fe-4S]-[ferredoxin] + 2 ATP + 2 H2O. Its pathway is porphyrin-containing compound metabolism; chlorophyll biosynthesis (light-independent). In terms of biological role, component of the dark-operative protochlorophyllide reductase (DPOR) that uses Mg-ATP and reduced ferredoxin to reduce ring D of protochlorophyllide (Pchlide) to form chlorophyllide a (Chlide). This reaction is light-independent. The L component serves as a unique electron donor to the NB-component of the complex, and binds Mg-ATP. The polypeptide is Light-independent protochlorophyllide reductase iron-sulfur ATP-binding protein (Cyanophora paradoxa).